The sequence spans 300 residues: Acetylglutamate kinase (300 aa).

Substrate is bound by residues 69–70, arginine 91, and asparagine 197; that span reads GG.

The protein belongs to the acetylglutamate kinase family. ArgB subfamily.

It localises to the cytoplasm. It carries out the reaction N-acetyl-L-glutamate + ATP = N-acetyl-L-glutamyl 5-phosphate + ADP. It functions in the pathway amino-acid biosynthesis; L-arginine biosynthesis; N(2)-acetyl-L-ornithine from L-glutamate: step 2/4. In terms of biological role, catalyzes the ATP-dependent phosphorylation of N-acetyl-L-glutamate. This chain is Acetylglutamate kinase, found in Kineococcus radiotolerans (strain ATCC BAA-149 / DSM 14245 / SRS30216).